We begin with the raw amino-acid sequence, 424 residues long: UDP-sugar transporter protein SLC35A5 (424 aa).

Over 1-8 (MEKQCCSH) the chain is Cytoplasmic. The chain crosses the membrane as a helical span at residues 9 to 29 (PVICSLSTMYTFLLGAIFIAL). The Lumenal portion of the chain corresponds to 30–53 (SSSRILLVKYSANEENKYDYLPTT). The chain crosses the membrane as a helical span at residues 54–74 (ANVCSELVKLVFCVLVSFCVI). Residues 75 to 93 (KKDHQSRNLKYASWKEFSN) lie on the Cytoplasmic side of the membrane. A helical transmembrane segment spans residues 94–116 (FMKWSIPAFLYFLDNLIVFYVLS). Topologically, residues 117–119 (YLQ) are lumenal. Residues 120-142 (PAMAVIFSNFSIITTALLFRIVL) form a helical membrane-spanning segment. Residues 143-147 (KRRLN) are Cytoplasmic-facing. The helical transmembrane segment at 148 to 168 (WIQWASLLILFLSIVALTAGT) threads the bilayer. The Lumenal segment spans residues 169–228 (KTLQHNLAGHGFHHDAFFSPSNSCLLFRSECPRKDNCTAKEWTFPEAKWNTTARVFSHIR). N-linked (GlcNAc...) asparagine glycosylation occurs at N204. Residues 229-249 (LGMGHVLIIVQCFISSMANIY) form a helical membrane-spanning segment. Residues 250-263 (NEKILKEGNQLAES) are Cytoplasmic-facing. The helical transmembrane segment at 264–284 (IFIQNSKLYFFGILFNGLTLG) threads the bilayer. The Lumenal segment spans residues 285 to 303 (LQRSNRDQIKNCGFFYGHN). A helical transmembrane segment spans residues 304–324 (AFSVALIFVTAFQGLSVAFIL). At 325–330 (KFLDNM) the chain is on the cytoplasmic side. Residues 331–351 (FHVLMAQVTTVIITTVSVLVF) traverse the membrane as a helical segment. At 352 to 354 (DFR) the chain is on the lumenal side. A helical membrane pass occupies residues 355 to 375 (PSLEFFLEAPSVLLSIFIYNA). At 376–424 (SKPQGPEYAPRQERIRDLSGNLWERSSGDGEELERLTKPKSDESDEDTF) the chain is on the cytoplasmic side. A phosphoserine mark is found at S394, S416, and S419. The interval 395-424 (GNLWERSSGDGEELERLTKPKSDESDEDTF) is disordered. Residues 408 to 417 (LERLTKPKSD) show a composition bias toward basic and acidic residues.

It belongs to the nucleotide-sugar transporter family. SLC35A subfamily. As to quaternary structure, probably forms homooligomers and heterooligomers with SLC35A1, SLC35A2, SLC35A3 and SLC35A4.

It is found in the golgi apparatus membrane. The enzyme catalyses UMP(out) + UDP-alpha-D-glucuronate(in) = UMP(in) + UDP-alpha-D-glucuronate(out). It carries out the reaction UMP(out) + UDP-N-acetyl-alpha-D-glucosamine(in) = UMP(in) + UDP-N-acetyl-alpha-D-glucosamine(out). The catalysed reaction is UDP-N-acetyl-alpha-D-galactosamine(in) + UMP(out) = UDP-N-acetyl-alpha-D-galactosamine(out) + UMP(in). In terms of biological role, probable UDP-sugar:UMP transmembrane antiporter involved in UDP-alpha-D-glucuronate/UDP-GlcA, UDP-GlcNAc/UDP-N-acetyl-alpha-D-glucosamine and UDP-N-acetyl-alpha-D-galactosamine/UDP-GalNAc transport from the cytosol to the lumen of the Golgi. This is UDP-sugar transporter protein SLC35A5 from Pongo abelii (Sumatran orangutan).